Reading from the N-terminus, the 245-residue chain is Oncostatin-M (245 aa).

An N-terminal signal peptide occupies residues 1 to 26; the sequence is MGAQRMQRTLLSLVLRLLLLCTVATG. 2 disulfides stabilise this stretch: C28–C135 and C71–C177. N-linked (GlcNAc...) asparagine glycosylation is present at N97. 2 disordered regions span residues 143 to 171 and 197 to 245; these read SSDPKAAEPTQPGPGPTPLPPTPPSSTFQ and WGER…APAR. Positions 153 to 166 are enriched in pro residues; the sequence is QPGPGPTPLPPTPP. The segment covering 203-218 has biased composition (basic residues); it reads RSRRHSPCRALKRGAR. The propeptide occupies 207–245; that stretch reads HSPCRALKRGARRTQPFPEIRRLAPRGQPPGSLWGAPAR.

It belongs to the LIF/OSM family. Propeptide processing is not important for receptor binding activity but may be important growth-inhibitory activity.

Its subcellular location is the secreted. In terms of biological role, growth regulator. Inhibits the proliferation of a number of tumor cell lines. It regulates cytokine production, including IL-6, G-CSF and GM-CSF from endothelial cells. Uses both type I OSM receptor (heterodimers composed of LIFR and IL6ST) and type II OSM receptor (heterodimers composed of OSMR and IL6ST). Involved in the maturation of fetal hepatocytes, thereby promoting liver development and regeneration. The chain is Oncostatin-M (OSM) from Bos taurus (Bovine).